Here is a 354-residue protein sequence, read N- to C-terminus: Probable L-ascorbate-6-phosphate lactonase UlaG (354 aa).

This sequence belongs to the UlaG family. The cofactor is a divalent metal cation.

The protein localises to the cytoplasm. It catalyses the reaction L-ascorbate 6-phosphate + H2O = 3-dehydro-L-gulonate 6-phosphate. It functions in the pathway cofactor degradation; L-ascorbate degradation; D-xylulose 5-phosphate from L-ascorbate: step 1/4. Functionally, probably catalyzes the hydrolysis of L-ascorbate-6-P into 3-keto-L-gulonate-6-P. Is essential for L-ascorbate utilization under anaerobic conditions. The protein is Probable L-ascorbate-6-phosphate lactonase UlaG of Shigella boydii serotype 18 (strain CDC 3083-94 / BS512).